The chain runs to 412 residues: Multifunctional CCA protein (412 aa).

Residues Gly-8 and Arg-11 each coordinate ATP. 2 residues coordinate CTP: Gly-8 and Arg-11. Mg(2+) is bound by residues Glu-21 and Asp-23. ATP-binding residues include Arg-91, Arg-137, and Arg-140. Positions 91, 137, and 140 each coordinate CTP. The 102-residue stretch at 228–329 (TGIHTLMTLA…LKLFNAIDVW (102 aa)) folds into the HD domain.

This sequence belongs to the tRNA nucleotidyltransferase/poly(A) polymerase family. Bacterial CCA-adding enzyme type 1 subfamily. Monomer. Can also form homodimers and oligomers. Requires Mg(2+) as cofactor. It depends on Ni(2+) as a cofactor.

It catalyses the reaction a tRNA precursor + 2 CTP + ATP = a tRNA with a 3' CCA end + 3 diphosphate. It carries out the reaction a tRNA with a 3' CCA end + 2 CTP + ATP = a tRNA with a 3' CCACCA end + 3 diphosphate. Catalyzes the addition and repair of the essential 3'-terminal CCA sequence in tRNAs without using a nucleic acid template. Adds these three nucleotides in the order of C, C, and A to the tRNA nucleotide-73, using CTP and ATP as substrates and producing inorganic pyrophosphate. tRNA 3'-terminal CCA addition is required both for tRNA processing and repair. Also involved in tRNA surveillance by mediating tandem CCA addition to generate a CCACCA at the 3' terminus of unstable tRNAs. While stable tRNAs receive only 3'-terminal CCA, unstable tRNAs are marked with CCACCA and rapidly degraded. This chain is Multifunctional CCA protein, found in Yersinia pseudotuberculosis serotype I (strain IP32953).